The sequence spans 596 residues: Fructan 1-exohydrolase (596 aa).

The N-terminal stretch at 1–20 (MAQAWAFLLPVLVLGSYVTS) is a signal peptide. D75 is an active-site residue. N-linked (GlcNAc...) asparagine glycans are attached at residues N168, N236, and N248. C446 and C492 are disulfide-bonded. N567 carries N-linked (GlcNAc...) asparagine glycosylation.

The protein belongs to the glycosyl hydrolase 32 family.

The enzyme catalyses Hydrolysis of terminal, non-reducing (2-&gt;1)-linked beta-D-fructofuranose residues in fructans.. Its activity is regulated as follows. Inhibited by sucrose. Hydrolyzes inulin-type beta-(2,1)-fructans. May play a role as a beta-(2,1)-trimmer during graminan biosynthesis. The polypeptide is Fructan 1-exohydrolase (Aegilops tauschii (Tausch's goatgrass)).